The primary structure comprises 477 residues: Ubiquitin carboxyl-terminal hydrolase 7 (477 aa).

The Ubiquitin-like domain maps to 2-77 (LTVSVKWQKK…LMMMGTADEI (76 aa)). A USP domain is found at 104–473 (AGLVNLGNTC…MAYIVMYKAR (370 aa)). Residue C113 is the Nucleophile of the active site. Residues 171–190 (MPFWMVLQKKYPQFAQLHNG) form a calmodulin-binding region. The interval 364–401 (QASAKSSSKGDDVKMTDAEGSSNQSGESSTGDQQEGAS) is disordered. The segment covering 371-380 (SKGDDVKMTD) has biased composition (basic and acidic residues). Positions 382–399 (EGSSNQSGESSTGDQQEG) are enriched in polar residues. Catalysis depends on H425, which acts as the Proton acceptor.

This sequence belongs to the peptidase C19 family. Interacts with calmodulin (CaM).

The enzyme catalyses Thiol-dependent hydrolysis of ester, thioester, amide, peptide and isopeptide bonds formed by the C-terminal Gly of ubiquitin (a 76-residue protein attached to proteins as an intracellular targeting signal).. Its function is as follows. Recognizes and hydrolyzes the peptide bond at the C-terminal Gly of ubiquitin. Involved in the processing of poly-ubiquitin precursors as well as that of ubiquitinated proteins. The protein is Ubiquitin carboxyl-terminal hydrolase 7 (UBP7) of Arabidopsis thaliana (Mouse-ear cress).